A 274-amino-acid polypeptide reads, in one-letter code: DegV domain-containing protein Cgl2349/cg2579 (274 aa).

Residues 3 to 259 (VRVIVDSSAC…PGAVSVSAVF (257 aa)) enclose the DegV domain. 2 residues coordinate hexadecanoate: T39 and S73.

Monomer.

Binds long-chain fatty acids, such as palmitate, and may play a role in lipid transport or fatty acid metabolism. The polypeptide is DegV domain-containing protein Cgl2349/cg2579 (Corynebacterium glutamicum (strain ATCC 13032 / DSM 20300 / JCM 1318 / BCRC 11384 / CCUG 27702 / LMG 3730 / NBRC 12168 / NCIMB 10025 / NRRL B-2784 / 534)).